The following is a 274-amino-acid chain: Copper chaperone for superoxide dismutase (274 aa).

The 64-residue stretch at 11–74 (MCALEFTVQM…LLESTGRQAV (64 aa)) folds into the HMA domain. Cys22 and Cys25 together coordinate Cu cation. Residue Lys76 forms a Glycyl lysine isopeptide (Lys-Gly) (interchain with G-Cter in ubiquitin) linkage. Residues 88–234 (AAVAIMEGSG…LACGIIARSA (147 aa)) form a superoxide dismutase-like region. Cys141 and Cys227 are disulfide-bonded. The Zn(2+) site is built by His147, His155, His164, and Asp167. Glycyl lysine isopeptide (Lys-Gly) (interchain with G-Cter in ubiquitin) cross-links involve residues Lys189, Lys216, and Lys241. The Cu cation site is built by Cys244 and Cys246. A Phosphoserine modification is found at Ser267.

It in the C-terminal section; belongs to the Cu-Zn superoxide dismutase family. As to quaternary structure, homodimer, and heterodimer with SOD1. Interacts with COMMD1. Interacts with XIAP/BIRC4. Interacts with SLC31A1(via C-terminal domain); this interaction is Cu(1+)-mediated. The heterodimer CCS:SOD1 interacts with SLC31A1; this heterotrimer is Cu(1+)-mediated and its maintenance is regulated through SOD1 activation. Cu(2+) serves as cofactor. Zn(2+) is required as a cofactor. Post-translationally, ubiquitinion by XIAP/BIRC4 leads to enhancement of its chaperone activity toward its physiologic target, SOD1, rather than proteasomal degradation. XIAP/BIRC4 preferentially ubiquitinates at Lys-241.

It is found in the cytoplasm. Delivers copper to copper zinc superoxide dismutase (SOD1). The sequence is that of Copper chaperone for superoxide dismutase from Rattus norvegicus (Rat).